A 157-amino-acid chain; its full sequence is Lipoprotein signal peptidase (157 aa).

Transmembrane regions (helical) follow at residues 10-30 (LIFI…KYAI), 58-78 (FLEG…FIFL), and 84-104 (LFKN…SNVL). Active-site residues include Asp-114 and Asp-131. Residues 122–142 (FDFAIFNFADVMIDVGVGVLL) form a helical membrane-spanning segment.

The protein belongs to the peptidase A8 family.

The protein resides in the cell inner membrane. It carries out the reaction Release of signal peptides from bacterial membrane prolipoproteins. Hydrolyzes -Xaa-Yaa-Zaa-|-(S,diacylglyceryl)Cys-, in which Xaa is hydrophobic (preferably Leu), and Yaa (Ala or Ser) and Zaa (Gly or Ala) have small, neutral side chains.. It functions in the pathway protein modification; lipoprotein biosynthesis (signal peptide cleavage). This protein specifically catalyzes the removal of signal peptides from prolipoproteins. This is Lipoprotein signal peptidase from Helicobacter pylori (strain Shi470).